The sequence spans 317 residues: Metaxin-1 (317 aa).

Glycyl lysine isopeptide (Lys-Gly) (interchain with G-Cter in ubiquitin) cross-links involve residues Lys38, Lys41, and Lys78. Residues 164-184 traverse the membrane as a helical segment; that stretch reads EELEKELYREARECLTLLSQR.

This sequence belongs to the metaxin family. As to quaternary structure, interacts with MTX2/metaxin-2. Associates with the mitochondrial contact site and cristae organizing system (MICOS) complex, composed of at least MICOS10/MIC10, CHCHD3/MIC19, CHCHD6/MIC25, APOOL/MIC27, IMMT/MIC60, APOO/MIC23/MIC26 and QIL1/MIC13. This complex was also known under the names MINOS or MitOS complex. The MICOS complex associates with mitochondrial outer membrane proteins SAMM50, MTX1 and MTX2 (together described as components of the mitochondrial outer membrane sorting assembly machinery (SAM) complex) and DNAJC11, mitochondrial inner membrane protein TMEM11 and with HSPA9. The MICOS and SAM complexes together with DNAJC11 are part of a large protein complex spanning both membranes termed the mitochondrial intermembrane space bridging (MIB) complex. Interacts with ARMC1. In terms of processing, ubiquitinated by PRKN during mitophagy, leading to its degradation and enhancement of mitophagy. Deubiquitinated by USP30.

Its subcellular location is the mitochondrion outer membrane. Functionally, involved in transport of proteins into the mitochondrion. Essential for embryonic development. In Macaca fascicularis (Crab-eating macaque), this protein is Metaxin-1 (MTX1).